Here is a 252-residue protein sequence, read N- to C-terminus: Imidazole glycerol phosphate synthase subunit HisF (252 aa).

Active-site residues include Asp-11 and Asp-130.

Belongs to the HisA/HisF family. In terms of assembly, heterodimer of HisH and HisF.

The protein localises to the cytoplasm. The catalysed reaction is 5-[(5-phospho-1-deoxy-D-ribulos-1-ylimino)methylamino]-1-(5-phospho-beta-D-ribosyl)imidazole-4-carboxamide + L-glutamine = D-erythro-1-(imidazol-4-yl)glycerol 3-phosphate + 5-amino-1-(5-phospho-beta-D-ribosyl)imidazole-4-carboxamide + L-glutamate + H(+). The protein operates within amino-acid biosynthesis; L-histidine biosynthesis; L-histidine from 5-phospho-alpha-D-ribose 1-diphosphate: step 5/9. In terms of biological role, IGPS catalyzes the conversion of PRFAR and glutamine to IGP, AICAR and glutamate. The HisF subunit catalyzes the cyclization activity that produces IGP and AICAR from PRFAR using the ammonia provided by the HisH subunit. The protein is Imidazole glycerol phosphate synthase subunit HisF of Lacticaseibacillus casei (strain BL23) (Lactobacillus casei).